We begin with the raw amino-acid sequence, 354 residues long: MTAAIRRQRELSILPKVTLEAMNTTVMQGFNRSERCPRDTRIVQLVFPALYTVVFLTGILLNTLALWVFVHIPSSSTFIIYLKNTLVADLIMTLMLPFKILSDSHLAPWQLRAFVCRFSSVIFYETMYVGIVLLGLIAFDRFLKIIRPLRNIFLKKPVFAKTVSIFIWFFLFFISLPNTILSNKEATPSSVKKCASLKGPLGLKWHQMVNNICQFIFWTVFILMLVFYVVIAKKVYDSYRKSKSKDRKNNKKLEGKVFVVVAVFFVCFAPFHFARVPYTHSQTNNKTDCRLQNQLFIAKETTLFLAATNICMDPLIYIFLCKKFTEKLPCMQGRKTTASSQENHSSQTDNITLG.

The Extracellular segment spans residues 1–49 (MTAAIRRQRELSILPKVTLEAMNTTVMQGFNRSERCPRDTRIVQLVFPA). 2 N-linked (GlcNAc...) asparagine glycosylation sites follow: asparagine 23 and asparagine 31. A helical membrane pass occupies residues 50–70 (LYTVVFLTGILLNTLALWVFV). The Cytoplasmic segment spans residues 71-77 (HIPSSST). A helical transmembrane segment spans residues 78–98 (FIIYLKNTLVADLIMTLMLPF). Topologically, residues 99 to 117 (KILSDSHLAPWQLRAFVCR) are extracellular. Cysteine 116 and cysteine 194 are disulfide-bonded. Residues 118–138 (FSSVIFYETMYVGIVLLGLIA) traverse the membrane as a helical segment. Residues 139–161 (FDRFLKIIRPLRNIFLKKPVFAK) lie on the Cytoplasmic side of the membrane. A helical transmembrane segment spans residues 162–182 (TVSIFIWFFLFFISLPNTILS). Residues 183-211 (NKEATPSSVKKCASLKGPLGLKWHQMVNN) lie on the Extracellular side of the membrane. A helical transmembrane segment spans residues 212 to 232 (ICQFIFWTVFILMLVFYVVIA). Over 233-252 (KKVYDSYRKSKSKDRKNNKK) the chain is Cytoplasmic. Residues 253–273 (LEGKVFVVVAVFFVCFAPFHF) form a helical membrane-spanning segment. The Extracellular segment spans residues 274-300 (ARVPYTHSQTNNKTDCRLQNQLFIAKE). An N-linked (GlcNAc...) asparagine glycan is attached at asparagine 285. The chain crosses the membrane as a helical span at residues 301–321 (TTLFLAATNICMDPLIYIFLC). Topologically, residues 322 to 333 (KKFTEKLPCMQG) are cytoplasmic. A disordered region spans residues 335–354 (KTTASSQENHSSQTDNITLG).

This sequence belongs to the G-protein coupled receptor 1 family. In terms of tissue distribution, strong expression in spleen and adult brain. Lower expression in placenta, lung, liver, spinal cord, thymus, small intestine, uterus, stomach, testis, fetal brain, and adrenal gland. Not detected in pancreas, heart, kidney, skeletal muscle, ovary or fetal aorta. Clearly detected in lymph node and bone marrow, weakly detected in peripheral blood mononuclear cells (PBMC) and in peripheral blood leukocytes (PBL), but not detected in polymorphonuclear cells (PMN). In the brain, detected in all brain regions examined.

Its subcellular location is the cell membrane. In terms of biological role, receptor for ADP. Coupled to G(i)-proteins. May play a role in hematopoiesis and the immune system. This Homo sapiens (Human) protein is P2Y purinoceptor 13 (P2RY13).